Consider the following 240-residue polypeptide: Pyridoxine 5'-phosphate synthase (240 aa).

Asn7 serves as a coordination point for 3-amino-2-oxopropyl phosphate. 1-deoxy-D-xylulose 5-phosphate is bound at residue 9-10; the sequence is DH. Residue Arg18 participates in 3-amino-2-oxopropyl phosphate binding. Residue His43 is the Proton acceptor of the active site. 2 residues coordinate 1-deoxy-D-xylulose 5-phosphate: Arg45 and His50. Glu70 serves as the catalytic Proton acceptor. Position 100 (Thr100) interacts with 1-deoxy-D-xylulose 5-phosphate. His191 (proton donor) is an active-site residue. 3-amino-2-oxopropyl phosphate-binding positions include Gly192 and 213 to 214; that span reads GH.

This sequence belongs to the PNP synthase family. In terms of assembly, homooctamer; tetramer of dimers.

It localises to the cytoplasm. The enzyme catalyses 3-amino-2-oxopropyl phosphate + 1-deoxy-D-xylulose 5-phosphate = pyridoxine 5'-phosphate + phosphate + 2 H2O + H(+). It functions in the pathway cofactor biosynthesis; pyridoxine 5'-phosphate biosynthesis; pyridoxine 5'-phosphate from D-erythrose 4-phosphate: step 5/5. Catalyzes the complicated ring closure reaction between the two acyclic compounds 1-deoxy-D-xylulose-5-phosphate (DXP) and 3-amino-2-oxopropyl phosphate (1-amino-acetone-3-phosphate or AAP) to form pyridoxine 5'-phosphate (PNP) and inorganic phosphate. This is Pyridoxine 5'-phosphate synthase from Crocosphaera subtropica (strain ATCC 51142 / BH68) (Cyanothece sp. (strain ATCC 51142)).